We begin with the raw amino-acid sequence, 24 residues long: Large ribosomal subunit protein uL10 (24 aa).

The protein belongs to the universal ribosomal protein uL10 family. Part of the ribosomal stalk of the 50S ribosomal subunit. The N-terminus interacts with L11 and the large rRNA to form the base of the stalk. The C-terminus forms an elongated spine to which L12 dimers bind in a sequential fashion forming a multimeric L10(L12)X complex.

Functionally, forms part of the ribosomal stalk, playing a central role in the interaction of the ribosome with GTP-bound translation factors. The chain is Large ribosomal subunit protein uL10 (rplJ) from Enterobacter cloacae.